Here is a 217-residue protein sequence, read N- to C-terminus: Pyrophosphatase PpaX (217 aa).

The Nucleophile role is filled by Asp-11.

This sequence belongs to the HAD-like hydrolase superfamily. PpaX family. Requires Mg(2+) as cofactor.

It catalyses the reaction diphosphate + H2O = 2 phosphate + H(+). Functionally, hydrolyzes pyrophosphate formed during P-Ser-HPr dephosphorylation by HPrK/P. Might play a role in controlling the intracellular pyrophosphate pool. The protein is Pyrophosphatase PpaX of Listeria welshimeri serovar 6b (strain ATCC 35897 / DSM 20650 / CCUG 15529 / CIP 8149 / NCTC 11857 / SLCC 5334 / V8).